We begin with the raw amino-acid sequence, 1755 residues long: Transposon Ty1-JR1 Gag-Pol polyprotein (1755 aa).

Over residues 1-16 (MESQQLSQHSHISHGS) the composition is skewed to low complexity. Disordered regions lie at residues 1–93 (MESQ…MMTQ), 126–173 (PQSQ…RPPP), and 352–421 (GSRN…SKST). 2 stretches are compositionally biased toward polar residues: residues 48-60 (TKAN…TPAS) and 127-152 (QSQF…GNTF). Positions 153 to 165 (TDSSSADSDMTST) are enriched in low complexity. The RNA-binding stretch occupies residues 299-401 (NNGIHINNKV…NSKSKTARAH (103 aa)). Low complexity predominate over residues 402-418 (NVSTSNNSPSTDNDSIS). Ser416 carries the phosphoserine modification. Asp461 acts as the For protease activity; shared with dimeric partner in catalysis. The segment at 583 to 640 (NVHTSESTRKYPYPFIHRMLAHANAQTIRYSLKNNTITYFNESDVDWSSAIDYQCPDC) is integrase-type zinc finger-like. Residues 660-835 (NSYEPFQYLH…AGLDISTLLP (176 aa)) form the Integrase catalytic domain. Positions 671 and 736 each coordinate Mg(2+). Disordered regions lie at residues 956-1087 (SKAV…ETEK), 1092-1111 (RSPS…NIVP), and 1130-1186 (DLPL…EDNE). Residues 960–969 (SPTDSTPPST) show a composition bias toward low complexity. Over residues 1005-1015 (STPQISNIEST) the composition is skewed to polar residues. Residues 1038-1053 (ESSHASKSKDFRHSDS) show a composition bias toward basic and acidic residues. 2 stretches are compositionally biased toward polar residues: residues 1054–1082 (YSEN…QISD) and 1101–1111 (PENNSSHNIVP). Residues 1178–1212 (KKRSLEDNETEIKVSRDTWNTKNMRSLEPPRSKKR) carry the Bipartite nuclear localization signal motif. Residues 1338 to 1476 (NNYYITQLDI…DILGLEIKYQ (139 aa)) enclose the Reverse transcriptase Ty1/copia-type domain. Residues Asp1346, Asp1427, Asp1428, Asp1610, Glu1652, and Asp1685 each coordinate Mg(2+). Residues 1610–1752 (DASYGNQPYY…IKTFKLLTNK (143 aa)) form the RNase H Ty1/copia-type domain.

The capsid protein forms a homotrimer, from which the VLPs are assembled. The protease is a homodimer, whose active site consists of two apposed aspartic acid residues. In terms of processing, initially, virus-like particles (VLPs) are composed of the structural unprocessed proteins Gag and Gag-Pol, and also contain the host initiator methionine tRNA (tRNA(i)-Met) which serves as a primer for minus-strand DNA synthesis, and a dimer of genomic Ty RNA. Processing of the polyproteins occurs within the particle and proceeds by an ordered pathway, called maturation. First, the protease (PR) is released by autocatalytic cleavage of the Gag-Pol polyprotein yielding capsid protein p45 and a Pol-p154 precursor protein. This cleavage is a prerequisite for subsequent processing of Pol-p154 at the remaining sites to release the mature structural and catalytic proteins. Maturation takes place prior to the RT reaction and is required to produce transposition-competent VLPs.

The protein localises to the cytoplasm. It is found in the nucleus. The enzyme catalyses DNA(n) + a 2'-deoxyribonucleoside 5'-triphosphate = DNA(n+1) + diphosphate. The catalysed reaction is Endonucleolytic cleavage to 5'-phosphomonoester.. Functionally, capsid protein (CA) is the structural component of the virus-like particle (VLP), forming the shell that encapsulates the retrotransposons dimeric RNA genome. The particles are assembled from trimer-clustered units and there are holes in the capsid shells that allow for the diffusion of macromolecules. CA also has nucleocapsid-like chaperone activity, promoting primer tRNA(i)-Met annealing to the multipartite primer-binding site (PBS), dimerization of Ty1 RNA and initiation of reverse transcription. The aspartyl protease (PR) mediates the proteolytic cleavages of the Gag and Gag-Pol polyproteins after assembly of the VLP. Its function is as follows. Reverse transcriptase/ribonuclease H (RT) is a multifunctional enzyme that catalyzes the conversion of the retro-elements RNA genome into dsDNA within the VLP. The enzyme displays a DNA polymerase activity that can copy either DNA or RNA templates, and a ribonuclease H (RNase H) activity that cleaves the RNA strand of RNA-DNA heteroduplexes during plus-strand synthesis and hydrolyzes RNA primers. The conversion leads to a linear dsDNA copy of the retrotransposon that includes long terminal repeats (LTRs) at both ends. In terms of biological role, integrase (IN) targets the VLP to the nucleus, where a subparticle preintegration complex (PIC) containing at least integrase and the newly synthesized dsDNA copy of the retrotransposon must transit the nuclear membrane. Once in the nucleus, integrase performs the integration of the dsDNA into the host genome. The polypeptide is Transposon Ty1-JR1 Gag-Pol polyprotein (TY1B-JR1) (Saccharomyces cerevisiae (strain ATCC 204508 / S288c) (Baker's yeast)).